Reading from the N-terminus, the 340-residue chain is Phenylalanine--tRNA ligase alpha subunit (340 aa).

Glu-254 is a Mg(2+) binding site.

Belongs to the class-II aminoacyl-tRNA synthetase family. Phe-tRNA synthetase alpha subunit type 1 subfamily. In terms of assembly, tetramer of two alpha and two beta subunits. Mg(2+) is required as a cofactor.

It localises to the cytoplasm. The enzyme catalyses tRNA(Phe) + L-phenylalanine + ATP = L-phenylalanyl-tRNA(Phe) + AMP + diphosphate + H(+). The protein is Phenylalanine--tRNA ligase alpha subunit of Caldicellulosiruptor saccharolyticus (strain ATCC 43494 / DSM 8903 / Tp8T 6331).